The sequence spans 1072 residues: Error-prone DNA polymerase (1072 aa).

The protein belongs to the DNA polymerase type-C family. DnaE2 subfamily.

It localises to the cytoplasm. It carries out the reaction DNA(n) + a 2'-deoxyribonucleoside 5'-triphosphate = DNA(n+1) + diphosphate. DNA polymerase involved in damage-induced mutagenesis and translesion synthesis (TLS). It is not the major replicative DNA polymerase. The chain is Error-prone DNA polymerase from Burkholderia pseudomallei (strain K96243).